Reading from the N-terminus, the 809-residue chain is Pentatricopeptide repeat-containing protein At1g11290, chloroplastic (809 aa).

The N-terminal 46 residues, 1 to 46, are a transit peptide targeting the chloroplast; it reads MSSQLVQFSTVPQIPNPPSRHRHFLSERNYIPANVYEHPAALLLER. PPR repeat units follow at residues 68–98, 99–133, 134–168, 169–199, 200–234, 235–269, 270–300, 301–335, 336–370, 371–401, 402–436, 437–471, 472–502, 503–537, 538–568, and 574–604; these read EHFF…IDSK, LNVL…DVEP, VVYN…GFSL, DLFA…MPER, DLVS…NLKP, SFIT…GFDS, LVNI…MLER, NVVS…GVKP, TDVS…GLDR, NVSV…LQSR, TLVS…TVKP, DTFT…CLDK, NVFV…MSER, HVTT…TIKP, NGVT…MKEN, and SMDH…MPVK. Residues 609 to 684 form a type E motif region; the sequence is VYGAMLGACQ…TPGCSMVEIK (76 aa). The type E(+) motif stretch occupies residues 685–715; that stretch reads NEVHSFFSGSTAHPDSKKIYAFLEKLICHIK. Residues 716–809 are type DYW motif; the sequence is EAGYVPDTNL…NGACSCGDYW (94 aa).

This sequence belongs to the PPR family. PCMP-H subfamily.

Its subcellular location is the plastid. It is found in the chloroplast. Functionally, involved in multiple sites RNA editing events in chloroplasts. Involved in the editing of the site 7 of ndhB (ndhB-7) and site 5 of ndhD (ndhD-5) transcripts, which are two plastid-encoded subunits of the chloroplast NAD(P)H dehydrogenase (NDH) complex. Involved in the editing of the site 3 of rpoB (rpoB-3) transcript. Required for the activity of the NDH complex of the photosynthetic electron transport chain. Possesses low endoribonuclease activity in vitro. This chain is Pentatricopeptide repeat-containing protein At1g11290, chloroplastic (PCMP-H40), found in Arabidopsis thaliana (Mouse-ear cress).